The sequence spans 771 residues: DNA polymerase 1 (771 aa).

The protein belongs to the DNA polymerase type-B family.

The catalysed reaction is DNA(n) + a 2'-deoxyribonucleoside 5'-triphosphate = DNA(n+1) + diphosphate. The polypeptide is DNA polymerase 1 (polI) (Pyrococcus abyssi (strain GE5 / Orsay)).